The following is an 82-amino-acid chain: MKKLLGLVVSCRMQKTVIVEVKTQVKHALYGKRIMKKKRYAVHDPEKKASLGELIWIRTCRPISKTKKWIYDSSANASQSSR.

Belongs to the universal ribosomal protein uS17 family. In terms of assembly, part of the 30S ribosomal subunit.

It is found in the plastid. The protein resides in the chloroplast. Functionally, one of the primary rRNA binding proteins, it binds specifically to the 5'-end of 16S ribosomal RNA. The polypeptide is Small ribosomal subunit protein uS17c (rps17) (Cyanidioschyzon merolae (strain NIES-3377 / 10D) (Unicellular red alga)).